The primary structure comprises 138 residues: ATP synthase epsilon chain (138 aa).

It belongs to the ATPase epsilon chain family. As to quaternary structure, F-type ATPases have 2 components, CF(1) - the catalytic core - and CF(0) - the membrane proton channel. CF(1) has five subunits: alpha(3), beta(3), gamma(1), delta(1), epsilon(1). CF(0) has three main subunits: a, b and c.

Its subcellular location is the cell inner membrane. Produces ATP from ADP in the presence of a proton gradient across the membrane. The sequence is that of ATP synthase epsilon chain from Idiomarina loihiensis (strain ATCC BAA-735 / DSM 15497 / L2-TR).